The primary structure comprises 743 residues: UvrABC system protein C (743 aa).

Positions 16-95 (VDPGVYKFRD…IKEFDPRFNV (80 aa)) constitute a GIY-YIG domain. Residues 208–243 (DKLVRQLEARMQQASEELDFETAARLRDDVGALRRA) enclose the UVR domain. Disordered regions lie at residues 497 to 543 (AEAA…QTGR) and 694 to 743 (PSAD…TGVE). Residues 506-520 (QASDTDGDQVSDTDG) are compositionally biased toward acidic residues. Residues 734–743 (QSASQRTGVE) are compositionally biased toward polar residues.

The protein belongs to the UvrC family. In terms of assembly, interacts with UvrB in an incision complex.

It localises to the cytoplasm. Functionally, the UvrABC repair system catalyzes the recognition and processing of DNA lesions. UvrC both incises the 5' and 3' sides of the lesion. The N-terminal half is responsible for the 3' incision and the C-terminal half is responsible for the 5' incision. The polypeptide is UvrABC system protein C (Rhodococcus opacus (strain B4)).